The primary structure comprises 252 residues: 2-succinyl-6-hydroxy-2,4-cyclohexadiene-1-carboxylate synthase (252 aa).

Belongs to the AB hydrolase superfamily. MenH family. In terms of assembly, monomer.

It catalyses the reaction 5-enolpyruvoyl-6-hydroxy-2-succinyl-cyclohex-3-ene-1-carboxylate = (1R,6R)-6-hydroxy-2-succinyl-cyclohexa-2,4-diene-1-carboxylate + pyruvate. It participates in quinol/quinone metabolism; 1,4-dihydroxy-2-naphthoate biosynthesis; 1,4-dihydroxy-2-naphthoate from chorismate: step 3/7. It functions in the pathway quinol/quinone metabolism; menaquinone biosynthesis. Catalyzes a proton abstraction reaction that results in 2,5-elimination of pyruvate from 2-succinyl-5-enolpyruvyl-6-hydroxy-3-cyclohexene-1-carboxylate (SEPHCHC) and the formation of 2-succinyl-6-hydroxy-2,4-cyclohexadiene-1-carboxylate (SHCHC). This chain is 2-succinyl-6-hydroxy-2,4-cyclohexadiene-1-carboxylate synthase, found in Escherichia coli O157:H7.